The sequence spans 267 residues: Probable ribosomal RNA small subunit methyltransferase A (267 aa).

Leu12, Gly37, Glu58, Asp83, and Asn100 together coordinate S-adenosyl-L-methionine.

It belongs to the class I-like SAM-binding methyltransferase superfamily. rRNA adenine N(6)-methyltransferase family. RsmA subfamily.

The protein localises to the cytoplasm. In terms of biological role, specifically dimethylates two adjacent adenosines in the loop of a conserved hairpin near the 3'-end of 16S rRNA in the 30S particle. May play a critical role in biogenesis of 30S subunits. This is Probable ribosomal RNA small subunit methyltransferase A from Methanococcus vannielii (strain ATCC 35089 / DSM 1224 / JCM 13029 / OCM 148 / SB).